The sequence spans 103 residues: Large ribosomal subunit protein uL24 (103 aa).

This sequence belongs to the universal ribosomal protein uL24 family. Part of the 50S ribosomal subunit.

One of two assembly initiator proteins, it binds directly to the 5'-end of the 23S rRNA, where it nucleates assembly of the 50S subunit. In terms of biological role, one of the proteins that surrounds the polypeptide exit tunnel on the outside of the subunit. The chain is Large ribosomal subunit protein uL24 from Roseobacter denitrificans (strain ATCC 33942 / OCh 114) (Erythrobacter sp. (strain OCh 114)).